The sequence spans 304 residues: Non-specific ribonucleoside hydrolase RihC (304 aa).

Residue histidine 233 is part of the active site.

The protein belongs to the IUNH family. RihC subfamily.

Functionally, hydrolyzes both purine and pyrimidine ribonucleosides with a broad-substrate specificity. The chain is Non-specific ribonucleoside hydrolase RihC from Shigella flexneri serotype 5b (strain 8401).